The chain runs to 557 residues: MPDNRRSQTITQGAQRTPNRAMLRAVGFGDGDFDKPIVGVANGFSTITPCNMGLDTLAKCAEHALKTAGAMPQMFGTITVSDGISMGTEGMKYSLVSREVIADSIETCVQAESMDGVIAIGGCDKNMPGAMIALARLNVPSIFVYGGTIKPGHYQGRDLTIVSAFEAVGQHTAHKIDDHELLEVERHACPGAGSCGGMYTANTMSSAIEAMGMSLPYSSTMAAEDEEKRISAIRSAEVLVDAVKKQILPRSLITRKSIENAVSVVMAVGGSTNAVLHLLAIAHAAEVEFSIDDFEAIRARVPVLCDLKPSGRYVATDLHKAGGIPQVMKMLLVHDLLHGDCLTISGQTIAEVLKDIPEQPRADQDVIQPWDNPVYEQGHLAILKGNLSSEGAVAKISGIKNPSITGPARVFDSEETCMAAILERKIQPGDVVVIRYEGPQGGPGMREMLSPTSALIGEGLGDSVGLITDGRFSGGTYGMVVGHVAPEAFAGGTIALVQEGDSITIDAHRRLLQLNVPEAELERRRAAWHPPAPRYTRGVLAKYAKLVSTASRGAVTD.

Cysteine 50 contacts [2Fe-2S] cluster. Aspartate 82 contributes to the Mg(2+) binding site. Position 123 (cysteine 123) interacts with [2Fe-2S] cluster. Positions 124 and 125 each coordinate Mg(2+). Lysine 125 carries the post-translational modification N6-carboxylysine. Cysteine 195 is a binding site for [2Fe-2S] cluster. Glutamate 447 serves as a coordination point for Mg(2+). Serine 473 functions as the Proton acceptor in the catalytic mechanism.

It belongs to the IlvD/Edd family. In terms of assembly, homodimer. [2Fe-2S] cluster serves as cofactor. The cofactor is Mg(2+).

It carries out the reaction (2R)-2,3-dihydroxy-3-methylbutanoate = 3-methyl-2-oxobutanoate + H2O. The enzyme catalyses (2R,3R)-2,3-dihydroxy-3-methylpentanoate = (S)-3-methyl-2-oxopentanoate + H2O. Its pathway is amino-acid biosynthesis; L-isoleucine biosynthesis; L-isoleucine from 2-oxobutanoate: step 3/4. It functions in the pathway amino-acid biosynthesis; L-valine biosynthesis; L-valine from pyruvate: step 3/4. In terms of biological role, functions in the biosynthesis of branched-chain amino acids. Catalyzes the dehydration of (2R,3R)-2,3-dihydroxy-3-methylpentanoate (2,3-dihydroxy-3-methylvalerate) into 2-oxo-3-methylpentanoate (2-oxo-3-methylvalerate) and of (2R)-2,3-dihydroxy-3-methylbutanoate (2,3-dihydroxyisovalerate) into 2-oxo-3-methylbutanoate (2-oxoisovalerate), the penultimate precursor to L-isoleucine and L-valine, respectively. This chain is Dihydroxy-acid dehydratase, found in Nitrosomonas europaea (strain ATCC 19718 / CIP 103999 / KCTC 2705 / NBRC 14298).